The chain runs to 564 residues: NAD-dependent malic enzyme (564 aa).

Tyr102 serves as the catalytic Proton donor. An NAD(+)-binding site is contributed by Arg155. Lys173 functions as the Proton acceptor in the catalytic mechanism. A divalent metal cation contacts are provided by Glu244, Asp245, and Asp268. The NAD(+) site is built by Asp268 and Asn417.

The protein belongs to the malic enzymes family. Homotetramer. The cofactor is Mg(2+). Mn(2+) is required as a cofactor.

It carries out the reaction (S)-malate + NAD(+) = pyruvate + CO2 + NADH. The enzyme catalyses oxaloacetate + H(+) = pyruvate + CO2. The polypeptide is NAD-dependent malic enzyme (Pseudomonas aeruginosa (strain UCBPP-PA14)).